We begin with the raw amino-acid sequence, 120 residues long: Aspartate 1-decarboxylase (120 aa).

Serine 25 acts as the Schiff-base intermediate with substrate; via pyruvic acid in catalysis. Serine 25 carries the pyruvic acid (Ser) modification. Threonine 57 is a substrate binding site. The active-site Proton donor is tyrosine 58. Residue 73 to 75 (GAA) coordinates substrate.

The protein belongs to the PanD family. Heterooctamer of four alpha and four beta subunits. Requires pyruvate as cofactor. In terms of processing, is synthesized initially as an inactive proenzyme, which is activated by self-cleavage at a specific serine bond to produce a beta-subunit with a hydroxyl group at its C-terminus and an alpha-subunit with a pyruvoyl group at its N-terminus.

The protein localises to the cytoplasm. The catalysed reaction is L-aspartate + H(+) = beta-alanine + CO2. It functions in the pathway cofactor biosynthesis; (R)-pantothenate biosynthesis; beta-alanine from L-aspartate: step 1/1. Catalyzes the pyruvoyl-dependent decarboxylation of aspartate to produce beta-alanine. This is Aspartate 1-decarboxylase from Thermus thermophilus (strain ATCC 27634 / DSM 579 / HB8).